The sequence spans 96 residues: Co-chaperonin GroES (96 aa).

Belongs to the GroES chaperonin family. In terms of assembly, heptamer of 7 subunits arranged in a ring. Interacts with the chaperonin GroEL.

It is found in the cytoplasm. Together with the chaperonin GroEL, plays an essential role in assisting protein folding. The GroEL-GroES system forms a nano-cage that allows encapsulation of the non-native substrate proteins and provides a physical environment optimized to promote and accelerate protein folding. GroES binds to the apical surface of the GroEL ring, thereby capping the opening of the GroEL channel. This Nitrosococcus oceani (strain ATCC 19707 / BCRC 17464 / JCM 30415 / NCIMB 11848 / C-107) protein is Co-chaperonin GroES.